The chain runs to 481 residues: NADH-quinone oxidoreductase subunit N (481 aa).

13 helical membrane passes run 9–29 (MLPELYLLGSAMIALLLGIVV), 39–59 (AVSMGVVVVLSWWSGVTDHVA), 76–96 (CISRMLVGVAGFVASLLFLCA), 104–124 (FSVVMLFATLGAMTLVQAGHF), 158–178 (FFILSALSSCIMLYGISLVYG), 205–225 (AFVLVGVLFKLAVVPFHMWAV), 232–252 (PMAAMAFFLIVTKSAAILLLA), 265–285 (ILYGIISVSGLSALVGELGAL), 293–313 (LLAYSNIGQLGYVLPVVVLHG), 318–338 (AIFHYVLTSWVINAWIFSVLL), 359–379 (FVAFALVVSMVSAAGFPPFLG), 399–419 (VAFPYVLLVCAVGIVPCFYCF), and 443–463 (LGLTVIAVVCMLLSVIALFLA).

This sequence belongs to the complex I subunit 2 family. NDH-1 is composed of 14 different subunits. Subunits NuoA, H, J, K, L, M, N constitute the membrane sector of the complex.

The protein localises to the cell inner membrane. It carries out the reaction a quinone + NADH + 5 H(+)(in) = a quinol + NAD(+) + 4 H(+)(out). NDH-1 shuttles electrons from NADH, via FMN and iron-sulfur (Fe-S) centers, to quinones in the respiratory chain. The immediate electron acceptor for the enzyme in this species is believed to be ubiquinone. Couples the redox reaction to proton translocation (for every two electrons transferred, four hydrogen ions are translocated across the cytoplasmic membrane), and thus conserves the redox energy in a proton gradient. In Anaplasma marginale (strain Florida), this protein is NADH-quinone oxidoreductase subunit N.